Reading from the N-terminus, the 596-residue chain is CRISPR-associated DNA-binding protein Cas12m (596 aa).

The segment at Glu19–Tyr53 is recognition domain (REC1-N). A recognition domain (REC2) region spans residues Pro54–Asp121. 2 coiled-coil regions span residues Asp55–Glu83 and Thr91–Val117. Positions Ala122–Gly190 are recognition domain (REC1-C). Positions Thr191 to Ile302 are wedge domain (WED). The segment at Gly303–Thr313 is linker. Residues Val314 to Ala541 are ruvC-I. His317 lines the Mg(2+) pocket. The target nucleic-acid binding (TNB) stretch occupies residues Ala541–Asp577. Positions 549, 552, 569, and 572 each coordinate Zn(2+). The tract at residues Gln578–Pro596 is ruvC-II. Asp579 contacts Mg(2+).

This sequence belongs to the CRISPR-associated DNA-binding protein Cas12m family. As to quaternary structure, binds crRNA and target dsDNA as a monomer. Requires Mg(2+) as cofactor. Zn(2+) serves as cofactor.

Its function is as follows. CRISPR (clustered regularly interspaced short palindromic repeat), is an adaptive immune system that provides protection against mobile genetic elements (viruses, transposable elements and conjugative plasmids). CRISPR clusters contain sequences complementary to antecedent mobile elements and target invading nucleic acids. CRISPR clusters are transcribed and processed into CRISPR RNA (crRNA). Recognizes a short motif in the CRISPR repeat sequences (the 5' PAM or protospacer adjacent motif, 5'-TTN-3' in this organism) to help distinguish self versus nonself, as targets within the bacterial CRISPR locus do not have PAMs. Upon expression in E.coli as a CRISPR locus inhibits plasmid propagation when targeted to regions essential for plasmid propagation (replication origin and dnaA). The crRNA-Cas12m complex inhibits transcription from target DNA leading to gene silencing. Cas12m-crRNA binds DNA in a PAM-dependent, crRNA-guided fashion. Binds a 17-bp crRNA-ss-target DNA heteroduplex, in a 56 nucleotide crRNA. No dsDNA, ssDNA or RNA nuclease activity is seen for the crRNA-Cas12m complex. Is required to process pre-crRNA to mature crRNA without a tracrRNA. Upon expression in E.coli as a CRISPR region preferentially binds to its associated crRNA. The chain is CRISPR-associated DNA-binding protein Cas12m from Mycolicibacterium mucogenicum (Mycobacterium mucogenicum).